The primary structure comprises 428 residues: Gamma-glutamyl phosphate reductase (428 aa).

This sequence belongs to the gamma-glutamyl phosphate reductase family.

It is found in the cytoplasm. It catalyses the reaction L-glutamate 5-semialdehyde + phosphate + NADP(+) = L-glutamyl 5-phosphate + NADPH + H(+). Its pathway is amino-acid biosynthesis; L-proline biosynthesis; L-glutamate 5-semialdehyde from L-glutamate: step 2/2. Functionally, catalyzes the NADPH-dependent reduction of L-glutamate 5-phosphate into L-glutamate 5-semialdehyde and phosphate. The product spontaneously undergoes cyclization to form 1-pyrroline-5-carboxylate. This is Gamma-glutamyl phosphate reductase from Streptomyces avermitilis (strain ATCC 31267 / DSM 46492 / JCM 5070 / NBRC 14893 / NCIMB 12804 / NRRL 8165 / MA-4680).